The chain runs to 309 residues: 2-dehydro-3-deoxygluconokinase (309 aa).

Residues 28 to 32 (GDTLN), Y88, 102 to 104 (YWR), and R170 each bind substrate. Residues 168–170 (NYR), 228–233 (KRGADS), and 261–264 (AAGD) contribute to the ATP site. A substrate-binding site is contributed by D264. D264 (proton acceptor) is an active-site residue.

It belongs to the carbohydrate kinase PfkB family.

It catalyses the reaction 2-dehydro-3-deoxy-D-gluconate + ATP = 2-dehydro-3-deoxy-6-phospho-D-gluconate + ADP + H(+). Its pathway is carbohydrate acid metabolism; 2-dehydro-3-deoxy-D-gluconate degradation; D-glyceraldehyde 3-phosphate and pyruvate from 2-dehydro-3-deoxy-D-gluconate: step 1/2. In terms of biological role, catalyzes the phosphorylation of 2-keto-3-deoxygluconate (KDG) to produce 2-keto-3-deoxy-6-phosphogluconate (KDPG). This Escherichia coli (strain K12) protein is 2-dehydro-3-deoxygluconokinase (kdgK).